A 154-amino-acid chain; its full sequence is Lipoprotein signal peptidase (154 aa).

3 helical membrane passes run 8–28 (LYLIVSLLVIIADQLLKNYIV), 58–78 (IFSGQMILFYLISIAAIAVVI), and 88–108 (NGLFDTGLALVLGGIIGNFID). Catalysis depends on residues aspartate 117 and aspartate 133. A helical membrane pass occupies residues 131–151 (IADSAITVGIILVFIYLIFIS).

Belongs to the peptidase A8 family.

It is found in the cell membrane. The enzyme catalyses Release of signal peptides from bacterial membrane prolipoproteins. Hydrolyzes -Xaa-Yaa-Zaa-|-(S,diacylglyceryl)Cys-, in which Xaa is hydrophobic (preferably Leu), and Yaa (Ala or Ser) and Zaa (Gly or Ala) have small, neutral side chains.. It functions in the pathway protein modification; lipoprotein biosynthesis (signal peptide cleavage). In terms of biological role, this protein specifically catalyzes the removal of signal peptides from prolipoproteins. This is Lipoprotein signal peptidase from Lactobacillus johnsonii (strain CNCM I-12250 / La1 / NCC 533).